Reading from the N-terminus, the 87-residue chain is MKTFESLFAELSEKAANQTPGSLTVDELGKGTHFIGKKIIEEAGETWIAAEYEGAERTAEEMSQLIYHLQVMMIDRGITLDDIYKNL.

Belongs to the PRA-PH family.

Its subcellular location is the cytoplasm. The catalysed reaction is 1-(5-phospho-beta-D-ribosyl)-ATP + H2O = 1-(5-phospho-beta-D-ribosyl)-5'-AMP + diphosphate + H(+). Its pathway is amino-acid biosynthesis; L-histidine biosynthesis; L-histidine from 5-phospho-alpha-D-ribose 1-diphosphate: step 2/9. The polypeptide is Phosphoribosyl-ATP pyrophosphatase (Bifidobacterium animalis subsp. lactis (strain AD011)).